The following is a 61-amino-acid chain: Small ribosomal subunit protein uS14 (61 aa).

4 residues coordinate Zn(2+): Cys24, Cys27, Cys40, and Cys43.

It belongs to the universal ribosomal protein uS14 family. Zinc-binding uS14 subfamily. Part of the 30S ribosomal subunit. Contacts proteins S3 and S10. It depends on Zn(2+) as a cofactor.

Binds 16S rRNA, required for the assembly of 30S particles and may also be responsible for determining the conformation of the 16S rRNA at the A site. The chain is Small ribosomal subunit protein uS14 from Mycoplasma mobile (strain ATCC 43663 / 163K / NCTC 11711) (Mesomycoplasma mobile).